The chain runs to 206 residues: LexA repressor (206 aa).

A DNA-binding region (H-T-H motif) is located at residues 28-48; the sequence is RAEIARRLGFKSANAAEEHLK. Active-site for autocatalytic cleavage activity residues include serine 123 and lysine 160.

This sequence belongs to the peptidase S24 family. Homodimer.

The catalysed reaction is Hydrolysis of Ala-|-Gly bond in repressor LexA.. Its function is as follows. Represses a number of genes involved in the response to DNA damage (SOS response), including recA and lexA. In the presence of single-stranded DNA, RecA interacts with LexA causing an autocatalytic cleavage which disrupts the DNA-binding part of LexA, leading to derepression of the SOS regulon and eventually DNA repair. In Shewanella halifaxensis (strain HAW-EB4), this protein is LexA repressor.